We begin with the raw amino-acid sequence, 1146 residues long: MGWGTGPPSWSELERVLSGRPGRTDPEAMYPGDGGDSPAWSRKREPYLAEPIRPVDRPTVPYAELHAHSAYSFLDGASQPEELVEEAVRLGLEAIALTDHDGFYGTVRFAEAAKEWGIATVFGAELSLGVARPAPRRSARKAARGRGRAVRYAATPEFEHAAAPDSAPRTGEPDPPGPHLLVLARGQEGYRRLSREIAAAHLAAGEKGVLRYDIDALTAAAGGHWHILTGCRKGHLRTALADDLAAGETGLPRAEAALRDLVERFGADRVSVELTHHGVPADDERNALLIALADRVGLPVLATTGAHFAGPEQRRRAMALAAIRARRSLDEMAGWLAPAGGAHLRSGAEMARLFAACPDAVANAVALSRECAFDLRLIAPQLPPFAVPDGHDENSWLRELVLRGAARRYGPPHANPPAYRQLEHELEVIATLGFPGYFLVVHDIVSFCERNGILCQGRGSAANSAVCFAIGITNVDPVANELLFERFLSPERDGPPDIDIDIESDRREEAIQHVYARYGREYAAQVANVITYRGKSAVRDAAKALGFSPGQQDAWSKQVSRWTGVGAETGTDIPEQVLRLAADLEGLPRHMGIHSGGMVICDRPIADVCPVEWARMAGRSVLQWDKDDCAAVGLVKFDMLGLGMLSALHYMIDLVREHEGVEVRLHELDLKEPAVYEMLSRADSVGVFQVESRAQMATLPRLRPREFYDLVVEVALIRPGPIQGGSVHPYIRRRNGTEPVTYDHPALENSLGRTLGVPLFQEQLMQMAVDVAGFTAAEADQLRRAMGSKRSPERMRRLKERLYRGMAELHGITGEVADRIYEKLYAFANFGFPESHSQSFAALVFYSAWFKLHHPAAFCAGLLRAQPMGFYSPQSLVADARRHGVPVHGPDVNASLAEATLENGGREVRLGLAGVRHIGSELAERIVAARVEHGPYTSVLDLTGRVELTVAQAEALATAGAFDSVTGPSGAERSGGRRAALWAAGAAARERAHLLPGTGPAADAPALPGMSALELAAADVWATGISPGSYPTEFLRARMDELGVIPAGRLLEVRDGSRVLVGGAVTHRQRPATAAGVTFLNLEDETGMVNVVCSVGLWTRYRALAQSASALLVRGRVQNAEGAVSVVAEHLQLLSLGMGSRSRDFR.

2 disordered regions span residues 1-43 and 154-178; these read MGWG…WSRK and ATPE…PPGP. Residues 12–26 show a composition bias toward basic and acidic residues; it reads ELERVLSGRPGRTDP.

Belongs to the DNA polymerase type-C family. DnaE2 subfamily.

Its subcellular location is the cytoplasm. The catalysed reaction is DNA(n) + a 2'-deoxyribonucleoside 5'-triphosphate = DNA(n+1) + diphosphate. In terms of biological role, DNA polymerase involved in damage-induced mutagenesis and translesion synthesis (TLS). It is not the major replicative DNA polymerase. In Nocardia farcinica (strain IFM 10152), this protein is Error-prone DNA polymerase.